The sequence spans 636 residues: Polyadenylate-binding protein 1 (636 aa).

An N-acetylmethionine modification is found at M1. RRM domains lie at 11 to 89 (ASLY…WSQR), 99 to 175 (GNIF…RFKS), 191 to 268 (TNVY…RAQK), and 294 to 370 (VNLY…LAQR). The interval 166–289 (RKVFVGRFKS…FEQMKQDRIT (124 aa)) is CSDE1-binding. K299 is subject to N6-methyllysine. S315 is subject to Phosphoserine. T319 is subject to Phosphothreonine. Omega-N-methylarginine is present on residues R385, R419, R432, and R436. Residues R455 and R460 each carry the omega-N-methylated arginine; by CARM1 modification. Residues R475 and R481 each carry the omega-N-methylarginine modification. Residue R493 is modified to Asymmetric dimethylarginine; alternate. At R493 the chain carries Dimethylated arginine; alternate. An Omega-N-methylarginine; alternate modification is found at R493. The residue at position 506 (R506) is an Omega-N-methylarginine. K512 bears the N6-acetyllysine mark. R518 is subject to Omega-N-methylarginine. The PABC domain occupies 542–619 (QEPLTASMLA…AVAVLQAHQA (78 aa)).

Belongs to the polyadenylate-binding protein type-1 family. As to quaternary structure, may form homodimers. Component of a multisubunit autoregulatory ribonucleoprotein complex (ARC), at least composed of IGF2BP1, PABPC1 and CSDE1. Directly interacts with IGF2BP1. Part of a complex associated with the FOS mCRD domain and consisting of HNRPD, SYNCRIP, PAIP1 and CSDE1/UNR. Interacts with PAIP1 and PAIP2 (via the PABPC1-interacting motifs PAM1 and PAM2). Interacts with PAIP1 with a 1:1 stoichiometry and with PAIP2 with a 1:2 stoichiometry. The interaction with CSDE1 is direct and RNA-independent. Found in a mRNP complex with YBX2. Interacts with TENT2/GLD2. Identified in the spliceosome C complex. Identified in a mRNP complex, at least composed of DHX9, DDX3X, ELAVL1, HNRNPU, IGF2BP1, ILF3, PABPC1, PCBP2, PTBP2, STAU1, STAU2, SYNCRIP and YBX1. The interaction with DDX3X is direct and RNA-independent. This interaction increases in stressed cells and decreases during cell recovery. Identified in a IGF2BP1-dependent mRNP granule complex containing untranslated mRNAs. Interacts with NXF1/TAP. Interacts with PIWIL1. Interacts with AGO1, AGO2, GSPT1 and GSPT2. Interacts with LARP4B. Interacts (via the second and third RRM domains and the C-terminus) with PAIP2B (via central acidic portion and C-terminus). Forms a complex with LARP1 and SHFL. Interacts with LARP4. Interacts with ZFC3H1 in a RNase-sensitive manner. Interacts with TRIM71 (via NHL repeats) in an RNA-dependent manner. Interacts with TENT5C; the interaction has no effect on TENT5C poly(A) polymerase function. Interacts with G3BP1 and G3BP2. Interacts with ENDOV; the interaction is RNA-dependent and stimulates ENDOV activity. Interacts with UPF1; the interaction is RNA-dependent. Interacts with IGF2BP2 and IGF2BP3. May interact with SETX. Interacts with RBM46. Interacts with PAN3. Phosphorylated by MAPKAPK2. Post-translationally, methylated by CARM1. Arg-493 is dimethylated, probably to asymmetric dimethylarginine.

Its subcellular location is the cytoplasm. It localises to the stress granule. The protein localises to the nucleus. The protein resides in the cell projection. It is found in the lamellipodium. Binds the poly(A) tail of mRNA, including that of its own transcript, and regulates processes of mRNA metabolism such as pre-mRNA splicing and mRNA stability. Its function in translational initiation regulation can either be enhanced by PAIP1 or repressed by PAIP2. Can probably bind to cytoplasmic RNA sequences other than poly(A) in vivo. Binds to N6-methyladenosine (m6A)-containing mRNAs and contributes to MYC stability by binding to m6A-containing MYC mRNAs. Involved in translationally coupled mRNA turnover. Implicated with other RNA-binding proteins in the cytoplasmic deadenylation/translational and decay interplay of the FOS mRNA mediated by the major coding-region determinant of instability (mCRD) domain. Involved in regulation of nonsense-mediated decay (NMD) of mRNAs containing premature stop codons; for the recognition of premature termination codons (PTC) and initiation of NMD a competitive interaction between UPF1 and PABPC1 with the ribosome-bound release factors is proposed. By binding to long poly(A) tails, may protect them from uridylation by ZCCHC6/ZCCHC11 and hence contribute to mRNA stability. This is Polyadenylate-binding protein 1 (PABPC1) from Pongo abelii (Sumatran orangutan).